A 149-amino-acid polypeptide reads, in one-letter code: Detocs response regulatory protein DtcB (149 aa).

One can recognise a Response regulatory domain in the interval Met-1–Asn-134. A 4-aspartylphosphate modification is found at Asp-53.

Post-translationally, probably phosphorylated by DtcA.

Possible phosphate scavenger member of the two-component regulatory system Detocs that confers resistance to bacteriophage. When the system (DtcA-DtcB-DtcC) is expressed in a susceptible E.coli (strain MG1655) it confers resistance to bacteriophages T2, T4, T5, T6 and SECphi27. Detocs inhibits T5 infection leading to growth arrest but not complete cell lysis, during SECphi27 infection leads to cell lysis. Overexpression of this protein along with the intact Detocs locus cancels T5 immunity; when the phosphate-receiving Asp-53 is mutated to Ala in this protein, immunity is restored. DtcA probably autophosphorylates upon sensing viral infection, and subsequently transfers the phosphate signal to DtcC which activates it, leading to an antiviral defense; DtcB (this subunit) may scavenge phosphorylation signals from accidental activation of DtcA. The sequence is that of Detocs response regulatory protein DtcB from Vibrio alginolyticus.